The following is a 660-amino-acid chain: tRNA 5-methylaminomethyl-2-thiouridine biosynthesis bifunctional protein MnmC (660 aa).

The tract at residues 1–233 (MTHSHAQLVW…KRHISHGWIA (233 aa)) is tRNA (mnm(5)s(2)U34)-methyltransferase. The tract at residues 260–660 (VGGGLAGAAS…IRRKLDPDAL (401 aa)) is FAD-dependent cmnm(5)s(2)U34 oxidoreductase.

In the N-terminal section; belongs to the methyltransferase superfamily. tRNA (mnm(5)s(2)U34)-methyltransferase family. The protein in the C-terminal section; belongs to the DAO family. The cofactor is FAD.

It is found in the cytoplasm. The enzyme catalyses 5-aminomethyl-2-thiouridine(34) in tRNA + S-adenosyl-L-methionine = 5-methylaminomethyl-2-thiouridine(34) in tRNA + S-adenosyl-L-homocysteine + H(+). Catalyzes the last two steps in the biosynthesis of 5-methylaminomethyl-2-thiouridine (mnm(5)s(2)U) at the wobble position (U34) in tRNA. Catalyzes the FAD-dependent demodification of cmnm(5)s(2)U34 to nm(5)s(2)U34, followed by the transfer of a methyl group from S-adenosyl-L-methionine to nm(5)s(2)U34, to form mnm(5)s(2)U34. In Chromobacterium violaceum (strain ATCC 12472 / DSM 30191 / JCM 1249 / CCUG 213 / NBRC 12614 / NCIMB 9131 / NCTC 9757 / MK), this protein is tRNA 5-methylaminomethyl-2-thiouridine biosynthesis bifunctional protein MnmC.